Here is a 453-residue protein sequence, read N- to C-terminus: Bifunctional protein GlmU (453 aa).

The tract at residues 1–228 is pyrophosphorylase; it reads MPHWAAVIMA…VHEALGINSR (228 aa). UDP-N-acetyl-alpha-D-glucosamine-binding positions include K23, Q73, 78-79, 100-102, G139, E153, N168, and N226; these read GT and SGD. D102 serves as a coordination point for Mg(2+). N226 serves as a coordination point for Mg(2+). The linker stretch occupies residues 229–249; sequence AQLAAAEDVARQRILSYWMEE. The tract at residues 250-453 is N-acetyltransferase; the sequence is GVTIIDPRST…IENWVRNKKK (204 aa). The UDP-N-acetyl-alpha-D-glucosamine site is built by R331 and K349. H361 functions as the Proton acceptor in the catalytic mechanism. UDP-N-acetyl-alpha-D-glucosamine is bound by residues Y364 and N375. Acetyl-CoA-binding positions include A378, 384-385, S403, A421, and R438; that span reads NY.

In the N-terminal section; belongs to the N-acetylglucosamine-1-phosphate uridyltransferase family. It in the C-terminal section; belongs to the transferase hexapeptide repeat family. In terms of assembly, homotrimer. Mg(2+) serves as cofactor.

Its subcellular location is the cytoplasm. It carries out the reaction alpha-D-glucosamine 1-phosphate + acetyl-CoA = N-acetyl-alpha-D-glucosamine 1-phosphate + CoA + H(+). The enzyme catalyses N-acetyl-alpha-D-glucosamine 1-phosphate + UTP + H(+) = UDP-N-acetyl-alpha-D-glucosamine + diphosphate. It participates in nucleotide-sugar biosynthesis; UDP-N-acetyl-alpha-D-glucosamine biosynthesis; N-acetyl-alpha-D-glucosamine 1-phosphate from alpha-D-glucosamine 6-phosphate (route II): step 2/2. The protein operates within nucleotide-sugar biosynthesis; UDP-N-acetyl-alpha-D-glucosamine biosynthesis; UDP-N-acetyl-alpha-D-glucosamine from N-acetyl-alpha-D-glucosamine 1-phosphate: step 1/1. It functions in the pathway bacterial outer membrane biogenesis; LPS lipid A biosynthesis. In terms of biological role, catalyzes the last two sequential reactions in the de novo biosynthetic pathway for UDP-N-acetylglucosamine (UDP-GlcNAc). The C-terminal domain catalyzes the transfer of acetyl group from acetyl coenzyme A to glucosamine-1-phosphate (GlcN-1-P) to produce N-acetylglucosamine-1-phosphate (GlcNAc-1-P), which is converted into UDP-GlcNAc by the transfer of uridine 5-monophosphate (from uridine 5-triphosphate), a reaction catalyzed by the N-terminal domain. This Desulfitobacterium hafniense (strain DSM 10664 / DCB-2) protein is Bifunctional protein GlmU.